A 236-amino-acid chain; its full sequence is Phosphoribosylaminoimidazole-succinocarboxamide synthase (236 aa).

The protein belongs to the SAICAR synthetase family.

It catalyses the reaction 5-amino-1-(5-phospho-D-ribosyl)imidazole-4-carboxylate + L-aspartate + ATP = (2S)-2-[5-amino-1-(5-phospho-beta-D-ribosyl)imidazole-4-carboxamido]succinate + ADP + phosphate + 2 H(+). Its pathway is purine metabolism; IMP biosynthesis via de novo pathway; 5-amino-1-(5-phospho-D-ribosyl)imidazole-4-carboxamide from 5-amino-1-(5-phospho-D-ribosyl)imidazole-4-carboxylate: step 1/2. The chain is Phosphoribosylaminoimidazole-succinocarboxamide synthase from Wolinella succinogenes (strain ATCC 29543 / DSM 1740 / CCUG 13145 / JCM 31913 / LMG 7466 / NCTC 11488 / FDC 602W) (Vibrio succinogenes).